The sequence spans 135 residues: MACGLVASNLNLKPGECLKVRGEVASDAKSFVLNLGKDSNNLCLHFNPRFNAHGDANTIVCNTKEDGTWGTEHREPAFPFQPGSITEVCITFDQADLTIKLPDGHEFKFPNRLNMEAINYMAADGDFKIKCVAFE.

The residue at position 2 (alanine 2) is an N-acetylalanine. Residues 4-135 enclose the Galectin domain; sequence GLVASNLNLK…DFKIKCVAFE (132 aa). An N6-acetyllysine mark is found at lysine 13, lysine 19, and lysine 29. Serine 30 carries the post-translational modification Phosphoserine. A beta-D-galactoside-binding positions include 45-49, histidine 53, asparagine 62, and 69-72; these read HFNPR and WGTE. Lysine 108 is modified (N6-acetyllysine; alternate). Lysine 108 bears the N6-succinyllysine; alternate mark. Position 128 is an N6-acetyllysine (lysine 128).

As to quaternary structure, homodimer. Binds LGALS3BP. Interacts with CD2, CD3, CD4, CD6, CD7, CD43, ALCAM and CD45. Interacts with laminin (via poly-N-acetyllactosamine). Interacts with SUSD2. Interacts with cargo receptor TMED10; the interaction mediates the translocation from the cytoplasm into the ERGIC (endoplasmic reticulum-Golgi intermediate compartment) and thereby secretion. Interacts with CD69.

Its subcellular location is the secreted. The protein resides in the extracellular space. It localises to the extracellular matrix. The protein localises to the cytoplasm. In terms of biological role, lectin that binds beta-galactoside and a wide array of complex carbohydrates. Plays a role in regulating apoptosis, cell proliferation and cell differentiation. Inhibits CD45 protein phosphatase activity and therefore the dephosphorylation of Lyn kinase. Strong inducer of T-cell apoptosis. Plays a negative role in Th17 cell differentiation via activation of the receptor CD69. This Mus musculus (Mouse) protein is Galectin-1 (Lgals1).